A 659-amino-acid polypeptide reads, in one-letter code: DNA mismatch repair protein MutL (659 aa).

This sequence belongs to the DNA mismatch repair MutL/HexB family.

Functionally, this protein is involved in the repair of mismatches in DNA. It is required for dam-dependent methyl-directed DNA mismatch repair. May act as a 'molecular matchmaker', a protein that promotes the formation of a stable complex between two or more DNA-binding proteins in an ATP-dependent manner without itself being part of a final effector complex. The polypeptide is DNA mismatch repair protein MutL (Ligilactobacillus salivarius (strain UCC118) (Lactobacillus salivarius)).